A 513-amino-acid chain; its full sequence is Membrane protein (513 aa).

A run of 4 repeats spans residues 9-11 (PSA), 12-14 (PSA), 15-17 (PSA), and 18-20 (PSA). A 4 X 3 AA tandem repeats of P-S-A region spans residues 9–20 (PSAPSAPSAPSA). 14 helical membrane-spanning segments follow: residues 32-52 (LTLH…LAIP), 56-76 (GLTV…VVWI), 79-99 (AVSY…LIGF), 126-146 (TALA…VTGL), 165-185 (ILIG…SATA), 208-228 (NIAA…NVGI), 254-274 (QWLI…YFLV), 309-329 (LAAV…LHSF), 332-352 (ATVT…VMDW), 360-380 (PWGT…LLST), 400-420 (GALL…LGFA), 422-442 (ATAL…TLPG), 447-467 (VGMT…PINA), and 487-507 (IGIP…ATYW).

This sequence belongs to the SLC13A/DASS transporter (TC 2.A.47) family. DIT1 subfamily.

It is found in the cell membrane. The polypeptide is Membrane protein (Cupriavidus necator (strain ATCC 17699 / DSM 428 / KCTC 22496 / NCIMB 10442 / H16 / Stanier 337) (Ralstonia eutropha)).